Consider the following 178-residue polypeptide: Probable DNA-directed RNA polymerase subunit delta (178 aa).

Residues 14–81 (LSLIDVAHFI…GNNTWGLRAW (68 aa)) form the HTH HARE-type domain. 2 disordered regions span residues 89–122 (EEVQTQTTPKKKRKSDDDDDEDEEILDDDVDYDD) and 141–178 (LDEDEDDDDHLPDGIEGDLATVEDDYTDGDYTEDPEDK). 3 stretches are compositionally biased toward acidic residues: residues 105 to 122 (DDDDEDEEILDDDVDYDD), 141 to 150 (LDEDEDDDDH), and 161 to 178 (TVEDDYTDGDYTEDPEDK).

The protein belongs to the RpoE family. As to quaternary structure, RNAP is composed of a core of 2 alpha, a beta and a beta' subunits. The core is associated with a delta subunit and one of several sigma factors.

Participates in both the initiation and recycling phases of transcription. In the presence of the delta subunit, RNAP displays an increased specificity of transcription, a decreased affinity for nucleic acids, and an increased efficiency of RNA synthesis because of enhanced recycling. The polypeptide is Probable DNA-directed RNA polymerase subunit delta (Listeria innocua serovar 6a (strain ATCC BAA-680 / CLIP 11262)).